The following is an 81-amino-acid chain: Sulfur carrier protein TusA (81 aa).

Catalysis depends on cysteine 19, which acts as the Cysteine persulfide intermediate.

Belongs to the sulfur carrier protein TusA family.

The protein resides in the cytoplasm. Functionally, sulfur carrier protein which probably makes part of a sulfur-relay system. The protein is Sulfur carrier protein TusA of Shewanella sp. (strain ANA-3).